A 152-amino-acid chain; its full sequence is Transcriptional regulator MraZ (152 aa).

SpoVT-AbrB domains lie at 5 to 52 (ATLV…PLPE) and 81 to 124 (ASEC…DETT).

Belongs to the MraZ family. Forms oligomers.

It localises to the cytoplasm. It is found in the nucleoid. Negatively regulates its own expression and that of the subsequent genes in the proximal part of the division and cell wall (dcw) gene cluster. Acts by binding directly to DNA. May also regulate the expression of genes outside the dcw cluster. The sequence is that of Transcriptional regulator MraZ from Salmonella gallinarum (strain 287/91 / NCTC 13346).